The sequence spans 515 residues: RNA-binding region-containing protein 3 (515 aa).

Positions 1–26 are disordered; sequence MAVPEPSMPLSRGGPGSASLSPPRGD. Position 21 is a phosphoserine (Ser-21). The 76-residue stretch at 27 to 102 folds into the RRM 1 domain; it reads RTLLVRHLPA…HTLVVEFAKE (76 aa). 3 disordered regions span residues 107–133, 215–254, and 337–369; these read HSSC…EKKE, LHAP…EEDR, and ETEQ…PKPN. A Phosphoserine modification is found at Ser-108. Over residues 115 to 133 the composition is skewed to basic and acidic residues; sequence AEKKKRLDDTVENDKEKKE. Residues 218 to 230 are compositionally biased toward pro residues; the sequence is PLPPTSPQPPEEP. Basic and acidic residues predominate over residues 337 to 348; sequence ETEQNNEEKNSD. Ser-349 carries the phosphoserine modification. The RRM 2 domain occupies 419–502; that stretch reads CRIYVKNLAR…KPMVVQFARS (84 aa).

Component of the U11/U12 snRNPs that are part of the U12-type spliceosome. Found in a complex with m(7)G-capped U12 snRNA. Interacts with PDCD7.

The protein resides in the nucleus. In terms of biological role, participates in pre-mRNA U12-dependent splicing, performed by the minor spliceosome which removes U12-type introns. U12-type introns comprises less than 1% of all non-coding sequences. Binds to the 3'-stem-loop of m(7)G-capped U12 snRNA. The chain is RNA-binding region-containing protein 3 (Rnpc3) from Rattus norvegicus (Rat).